The chain runs to 616 residues: Chaperone protein HtpG (616 aa).

The tract at residues 1–334 (MTIKQTHSFQ…TADLSLNLSR (334 aa)) is a; substrate-binding. Positions 335–549 (EILQDNKVIK…ENEMGGNMER (215 aa)) are b. A c region spans residues 550–616 (IMKSLGQDIP…FVKRINKLIN (67 aa)).

It belongs to the heat shock protein 90 family. Homodimer.

It is found in the cytoplasm. Molecular chaperone. Has ATPase activity. This Vesicomyosocius okutanii subsp. Calyptogena okutanii (strain HA) protein is Chaperone protein HtpG.